The following is a 313-amino-acid chain: MLDKIIRIATRQSPLALWQAHYVQHLLQANHPGLQVELVPMVTRGDIILDTPLAKVGGKGLFVKELELALLEGRADIAVHSMKDVPIAFPEGLGLVTICERDDPRDAFVSINYAHLDELPAGSIVGTSSLRRQCQLRERRPDLIIRDLRGNVGTRLAKLDKGEYHAIILAVAGLKRLGLETRIRYAMPAEESLPAVGQGAVGIECRLDDNFTRQLLAPLNHRETELRVCAERAMNTRLEGGCQVPIGSYAELDGDTLWLRALVGAPDGSEIIRGERRGPAENAEQMGVELADELLSRGAREILAEVYQDNPPL.

The residue at position 242 (Cys242) is an S-(dipyrrolylmethanemethyl)cysteine.

The protein belongs to the HMBS family. Monomer. Dipyrromethane is required as a cofactor.

The enzyme catalyses 4 porphobilinogen + H2O = hydroxymethylbilane + 4 NH4(+). The protein operates within porphyrin-containing compound metabolism; protoporphyrin-IX biosynthesis; coproporphyrinogen-III from 5-aminolevulinate: step 2/4. In terms of biological role, tetrapolymerization of the monopyrrole PBG into the hydroxymethylbilane pre-uroporphyrinogen in several discrete steps. This chain is Porphobilinogen deaminase, found in Yersinia enterocolitica serotype O:8 / biotype 1B (strain NCTC 13174 / 8081).